A 249-amino-acid chain; its full sequence is MAERGELDLTGAKQNTGVWLVKVPKYLSQQWAKAPGRGEVGKLRIAKNQGRTEVSFTLNEDLANIHDIGGKPASVSAPREHPFVLQSVGGQTLTVFTESSSDKLSLEGIVVQRAECRPAANENYMRLKRLQIEESSKPVRLSQQLDKVVTTNYKPVANHQYNIEYERKKKEDGKRARADKQHVLDMLFSAFEKHQYYNLKDLVDITKQPVSYLKDILKEIGVQNVKGIHKNTWELKPEYRHYQVEEKSD.

A2 carries the post-translational modification N-acetylalanine. Residues K22, K33, and K137 each carry the N6-acetyllysine modification. A Phosphoserine modification is found at S142. DNA contacts are provided by G227 and H229. Position 248 is a phosphoserine (S248).

It belongs to the TFIIF beta subunit family. As to quaternary structure, heterodimer of an alpha and a beta subunit. Interacts with HTATSF1 and GPBP1. Interacts with URI1. Interacts with GTF2B (via N-terminus); this interaction is inhibited in presence of GTF2F1. Part of TBP-based Pol II pre-initiation complex (PIC), in which Pol II core assembles with general transcription factors and other specific initiation factors including GTF2E1, GTF2E2, GTF2F1, GTF2F2, TCEA1, ERCC2, ERCC3, GTF2H2, GTF2H3, GTF2H4, GTF2H5, GTF2A1, GTF2A2, GTF2B and TBP; this large multi-subunit PIC complex mediates DNA unwinding and targets Pol II core to the transcription start site where the first phosphodiester bond forms.

It localises to the nucleus. Its function is as follows. TFIIF is a general transcription initiation factor that binds to RNA polymerase II and helps to recruit it to the initiation complex in collaboration with TFIIB. The chain is General transcription factor IIF subunit 2 (GTF2F2) from Bos taurus (Bovine).